Reading from the N-terminus, the 318-residue chain is MFLINVLTVTLPILLAVAFLTLVERKALGYMQLRKGPNVVGPYGLLQPIADAIKLFTKEPVYPQTSSKFLFTIAPILALTLALTVWAPLPMPYPLINLNLSLLFILAMSSLMVYSILWSGWASNSKYALMGALRAVAQTISYEVSMTTIILSMVLMNGSFTLTAFATTQEHLWLIFPMWPLMMMWFTSTLAETNRAPFDLTEGESELVSGFNVEYSAGPFALFFMAEYANIIMMNALTVILFMGTSCNPQMPEISTINFVVKTMILTICFLWVRASYPRFRYDQLMYLLWKNFLPLTLALCMWHISILISLACIPPQA.

8 helical membrane passes run 2–22 (FLINVLTVTLPILLAVAFLTL), 69–89 (FLFTIAPILALTLALTVWAPL), 102–122 (LLFILAMSSLMVYSILWSGWA), 146–166 (MTTIILSMVLMNGSFTLTAFA), 171–191 (HLWLIFPMWPLMMMWFTSTLA), 222–242 (LFFMAEYANIIMMNALTVILF), 253–273 (EISTINFVVKTMILTICFLWV), and 294–314 (LPLTLALCMWHISILISLACI).

Belongs to the complex I subunit 1 family.

It is found in the mitochondrion inner membrane. It catalyses the reaction a ubiquinone + NADH + 5 H(+)(in) = a ubiquinol + NAD(+) + 4 H(+)(out). Functionally, core subunit of the mitochondrial membrane respiratory chain NADH dehydrogenase (Complex I) that is believed to belong to the minimal assembly required for catalysis. Complex I functions in the transfer of electrons from NADH to the respiratory chain. The immediate electron acceptor for the enzyme is believed to be ubiquinone. In Mammuthus primigenius (Siberian woolly mammoth), this protein is NADH-ubiquinone oxidoreductase chain 1 (MT-ND1).